The sequence spans 358 residues: Photosystem II protein D1 (358 aa).

Transmembrane regions (helical) follow at residues 29–46 (YVGWFGVLMIPTLLAATI), 116–131 (HFLIGIFCWLGRQWEL), and 140–154 (WICVAYSAPVAAATS). A chlorophyll a-binding site is contributed by H116. W124 is a binding site for pheophytin a. [CaMn4O5] cluster contacts are provided by D168 and E187. The chain crosses the membrane as a helical span at residues 195–216 (FHQLGVAGVFGGSLFCAMHGSL). H196 contacts chlorophyll a. A quinone is bound by residues H213 and 262-263 (SF). A Fe cation-binding site is contributed by H213. H270 is a Fe cation binding site. Residues 272 to 286 (FLAAWPVVCIWFTAL) traverse the membrane as a helical segment. Residues H330, E331, D340, and A342 each contribute to the [CaMn4O5] cluster site. Residues 343-358 (AGEVLPIALQSPAING) constitute a propeptide that is removed on maturation.

The protein belongs to the reaction center PufL/M/PsbA/D family. PSII is composed of 1 copy each of membrane proteins PsbA, PsbB, PsbC, PsbD, PsbE, PsbF, PsbH, PsbI, PsbJ, PsbK, PsbL, PsbM, PsbT, PsbX, PsbY, PsbZ, Psb30/Ycf12, peripheral proteins PsbO, CyanoQ (PsbQ), PsbU, PsbV and a large number of cofactors. It forms dimeric complexes. The D1/D2 heterodimer binds P680, chlorophylls that are the primary electron donor of PSII, and subsequent electron acceptors. It shares a non-heme iron and each subunit binds pheophytin, quinone, additional chlorophylls, carotenoids and lipids. D1 provides most of the ligands for the Mn4-Ca-O5 cluster of the oxygen-evolving complex (OEC). There is also a Cl(-1) ion associated with D1 and D2, which is required for oxygen evolution. The PSII complex binds additional chlorophylls, carotenoids and specific lipids. is required as a cofactor. Tyr-159 forms a radical intermediate that is referred to as redox-active TyrZ, YZ or Y-Z. Post-translationally, C-terminally processed by CtpA; processing is essential to allow assembly of the oxygen-evolving complex and thus photosynthetic growth.

The protein localises to the cellular thylakoid membrane. The catalysed reaction is 2 a plastoquinone + 4 hnu + 2 H2O = 2 a plastoquinol + O2. Functionally, photosystem II (PSII) is a light-driven water:plastoquinone oxidoreductase that uses light energy to abstract electrons from H(2)O, generating O(2) and a proton gradient subsequently used for ATP formation. It consists of a core antenna complex that captures photons, and an electron transfer chain that converts photonic excitation into a charge separation. The D1/D2 (PsbA/PsbD) reaction center heterodimer binds P680, the primary electron donor of PSII as well as several subsequent electron acceptors. This chain is Photosystem II protein D1, found in Mastigocladus laminosus (Fischerella sp.).